We begin with the raw amino-acid sequence, 371 residues long: Cytochrome b (371 aa).

The next 4 membrane-spanning stretches (helical) occupy residues 25–45, 69–90, 105–125, and 170–190; these read FGSM…FLAV, WMMQ…YIHI, WLSG…GYVL, and FFAL…LHIM. Heme b-binding residues include His-75 and His-89. The heme b site is built by His-174 and His-188. Residue His-193 coordinates a ubiquinone. 4 helical membrane passes run 218–238, 280–300, 312–332, and 339–358; these read YKDL…VSFL, LWGA…PFTH, IMQL…WAAT, and FTMI…IMNP.

The protein belongs to the cytochrome b family. The cytochrome bc1 complex contains 3 respiratory subunits (MT-CYB, CYC1 and UQCRFS1), 2 core proteins (UQCRC1 and UQCRC2) and probably 6 low-molecular weight proteins. Requires heme b as cofactor.

It localises to the mitochondrion inner membrane. In terms of biological role, component of the ubiquinol-cytochrome c reductase complex (complex III or cytochrome b-c1 complex) that is part of the mitochondrial respiratory chain. The b-c1 complex mediates electron transfer from ubiquinol to cytochrome c. Contributes to the generation of a proton gradient across the mitochondrial membrane that is then used for ATP synthesis. The polypeptide is Cytochrome b (MT-CYB) (Eryx miliaris nogaiorum (Black sand boa)).